The sequence spans 919 residues: Transcriptional regulatory protein EDS1 (919 aa).

A disordered region spans residues 1–54; that stretch reads MSHHVPNLYGTPIRDPHERKRNSASMGEVNQSVSSRNCERGSEKGTKQRKKASH. The span at 23-36 shows a compositional bias: polar residues; that stretch reads SASMGEVNQSVSSR. The span at 37 to 46 shows a compositional bias: basic and acidic residues; it reads NCERGSEKGT. Positions 56-85 form a DNA-binding region, zn(2)-C6 fungal-type; that stretch reads CDQCRRKRIKCRFDKHTGVCQGCLEVGEKC. A disordered region spans residues 297 to 338; that stretch reads AGFPNKKLGTDGRSDKWDKNSTWKPVYRSSNPSHPSTEKNVS. A compositionally biased stretch (basic and acidic residues) spans 304–317; sequence LGTDGRSDKWDKNS. Positions 318–338 are enriched in polar residues; sequence TWKPVYRSSNPSHPSTEKNVS.

Belongs to the EDS1/RGT1 family. In terms of assembly, binds DNA in a sequence-specific manner.

It is found in the nucleus. The protein is Transcriptional regulatory protein EDS1 (EDS1) of Saccharomyces cerevisiae (strain ATCC 204508 / S288c) (Baker's yeast).